A 348-amino-acid chain; its full sequence is Holliday junction branch migration complex subunit RuvB (348 aa).

The tract at residues 4-186 (TDRIISANTV…FGIIQRLEFY (183 aa)) is large ATPase domain (RuvB-L). Residues I25, R26, G67, K70, T71, T72, 133 to 135 (EDY), R176, Y186, and R223 each bind ATP. T71 contacts Mg(2+). The small ATPAse domain (RuvB-S) stretch occupies residues 187–257 (SVDDLAKIVY…IADKALTMLK (71 aa)). The segment at 260–348 (PVGFDHMDHK…SSDQQQNLSL (89 aa)) is head domain (RuvB-H). Positions 315 and 320 each coordinate DNA.

The protein belongs to the RuvB family. As to quaternary structure, homohexamer. Forms an RuvA(8)-RuvB(12)-Holliday junction (HJ) complex. HJ DNA is sandwiched between 2 RuvA tetramers; dsDNA enters through RuvA and exits via RuvB. An RuvB hexamer assembles on each DNA strand where it exits the tetramer. Each RuvB hexamer is contacted by two RuvA subunits (via domain III) on 2 adjacent RuvB subunits; this complex drives branch migration. In the full resolvosome a probable DNA-RuvA(4)-RuvB(12)-RuvC(2) complex forms which resolves the HJ.

It localises to the cytoplasm. It catalyses the reaction ATP + H2O = ADP + phosphate + H(+). In terms of biological role, the RuvA-RuvB-RuvC complex processes Holliday junction (HJ) DNA during genetic recombination and DNA repair, while the RuvA-RuvB complex plays an important role in the rescue of blocked DNA replication forks via replication fork reversal (RFR). RuvA specifically binds to HJ cruciform DNA, conferring on it an open structure. The RuvB hexamer acts as an ATP-dependent pump, pulling dsDNA into and through the RuvAB complex. RuvB forms 2 homohexamers on either side of HJ DNA bound by 1 or 2 RuvA tetramers; 4 subunits per hexamer contact DNA at a time. Coordinated motions by a converter formed by DNA-disengaged RuvB subunits stimulates ATP hydrolysis and nucleotide exchange. Immobilization of the converter enables RuvB to convert the ATP-contained energy into a lever motion, pulling 2 nucleotides of DNA out of the RuvA tetramer per ATP hydrolyzed, thus driving DNA branch migration. The RuvB motors rotate together with the DNA substrate, which together with the progressing nucleotide cycle form the mechanistic basis for DNA recombination by continuous HJ branch migration. Branch migration allows RuvC to scan DNA until it finds its consensus sequence, where it cleaves and resolves cruciform DNA. The polypeptide is Holliday junction branch migration complex subunit RuvB (Francisella philomiragia subsp. philomiragia (strain ATCC 25017 / CCUG 19701 / FSC 153 / O#319-036)).